The primary structure comprises 34 residues: Photosystem I reaction center subunit XII (34 aa).

Residues 10–32 form a helical membrane-spanning segment; that stretch reads VFVALVVAAHAAVLALRLSISLY.

It belongs to the PsaM family.

It is found in the cellular thylakoid membrane. The chain is Photosystem I reaction center subunit XII from Parasynechococcus marenigrum (strain WH8102).